We begin with the raw amino-acid sequence, 443 residues long: Thymidine phosphorylase (443 aa).

It belongs to the thymidine/pyrimidine-nucleoside phosphorylase family. In terms of assembly, homodimer.

The catalysed reaction is thymidine + phosphate = 2-deoxy-alpha-D-ribose 1-phosphate + thymine. Its pathway is pyrimidine metabolism; dTMP biosynthesis via salvage pathway; dTMP from thymine: step 1/2. Functionally, the enzymes which catalyze the reversible phosphorolysis of pyrimidine nucleosides are involved in the degradation of these compounds and in their utilization as carbon and energy sources, or in the rescue of pyrimidine bases for nucleotide synthesis. The polypeptide is Thymidine phosphorylase (Shewanella amazonensis (strain ATCC BAA-1098 / SB2B)).